A 257-amino-acid chain; its full sequence is Cytochrome c oxidase subunit 3 (257 aa).

6 helical membrane passes run Pro-15 to Phe-35, Gly-82 to Phe-102, Phe-124 to Ala-144, Cys-156 to Leu-176, Phe-194 to Ile-214, and Ala-235 to Trp-255.

The protein belongs to the cytochrome c oxidase subunit 3 family. In terms of assembly, component of the cytochrome c oxidase (complex IV, CIV), a multisubunit enzyme composed of a catalytic core of 3 subunits and several supernumerary subunits. The complex exists as a monomer or a dimer and forms supercomplexes (SCs) in the inner mitochondrial membrane with ubiquinol-cytochrome c oxidoreductase (cytochrome b-c1 complex, complex III, CIII).

The protein resides in the mitochondrion inner membrane. It catalyses the reaction 4 Fe(II)-[cytochrome c] + O2 + 8 H(+)(in) = 4 Fe(III)-[cytochrome c] + 2 H2O + 4 H(+)(out). Functionally, component of the cytochrome c oxidase, the last enzyme in the mitochondrial electron transport chain which drives oxidative phosphorylation. The respiratory chain contains 3 multisubunit complexes succinate dehydrogenase (complex II, CII), ubiquinol-cytochrome c oxidoreductase (cytochrome b-c1 complex, complex III, CIII) and cytochrome c oxidase (complex IV, CIV), that cooperate to transfer electrons derived from NADH and succinate to molecular oxygen, creating an electrochemical gradient over the inner membrane that drives transmembrane transport and the ATP synthase. Cytochrome c oxidase is the component of the respiratory chain that catalyzes the reduction of oxygen to water. Electrons originating from reduced cytochrome c in the intermembrane space (IMS) are transferred via the dinuclear copper A center (CU(A)) of subunit 2 and heme A of subunit 1 to the active site in subunit 1, a binuclear center (BNC) formed by heme A3 and copper B (CU(B)). The BNC reduces molecular oxygen to 2 water molecules using 4 electrons from cytochrome c in the IMS and 4 protons from the mitochondrial matrix. In Artemia franciscana (Brine shrimp), this protein is Cytochrome c oxidase subunit 3 (COIII).